Consider the following 335-residue polypeptide: Histidinol-phosphate aminotransferase (335 aa).

The residue at position 202 (K202) is an N6-(pyridoxal phosphate)lysine.

This sequence belongs to the class-II pyridoxal-phosphate-dependent aminotransferase family. Histidinol-phosphate aminotransferase subfamily. Homodimer. The cofactor is pyridoxal 5'-phosphate.

It carries out the reaction L-histidinol phosphate + 2-oxoglutarate = 3-(imidazol-4-yl)-2-oxopropyl phosphate + L-glutamate. It functions in the pathway amino-acid biosynthesis; L-histidine biosynthesis; L-histidine from 5-phospho-alpha-D-ribose 1-diphosphate: step 7/9. This Thermotoga neapolitana (strain ATCC 49049 / DSM 4359 / NBRC 107923 / NS-E) protein is Histidinol-phosphate aminotransferase.